Here is a 535-residue protein sequence, read N- to C-terminus: D-2-hydroxyglutarate dehydrogenase, mitochondrial (535 aa).

A mitochondrion-targeting transit peptide spans 1–50; the sequence is MVLHLVPRWSASLFRASPRWKKTYSQRASAQLKWLGCPRSVYSPLACRAY. An FAD-binding PCMH-type domain is found at 110-289; it reads VRGCSKVLLR…TAVSIVCPPR (180 aa). Lys-115 is modified (N6-succinyllysine). Positions 400, 404, and 415 each coordinate (R)-2-hydroxyglutarate. Arg-400 is a (R)-lactate binding site. The (R)-malate site is built by Arg-400, Thr-404, and Lys-415. Zn(2+) is bound by residues His-448 and His-455. Asn-457 lines the (R)-2-hydroxyglutarate pocket. A Zn(2+)-binding site is contributed by Glu-489. Residue His-490 participates in (R)-2-hydroxyglutarate binding. His-490 provides a ligand contact to (R)-lactate. His-490 serves as a coordination point for (R)-malate.

This sequence belongs to the FAD-binding oxidoreductase/transferase type 4 family. FAD serves as cofactor.

It localises to the mitochondrion. It catalyses the reaction (R)-2-hydroxyglutarate + A = 2-oxoglutarate + AH2. The enzyme catalyses (R)-malate + A = oxaloacetate + AH2. Its activity is regulated as follows. Activated by zinc, cobalt and manganese ions. Inhibited by EDTA. Catalyzes the oxidation of D-2-hydroxyglutarate (D-2-HG) to alpha-ketoglutarate. Also catalyzes the oxidation of other D-2-hydroxyacids, such as D-malate (D-MAL) and D-lactate (D-LAC). Exhibits high activities towards D-2-HG and D-MAL but a very weak activity towards D-LAC. The protein is D-2-hydroxyglutarate dehydrogenase, mitochondrial of Rattus norvegicus (Rat).